The primary structure comprises 67 residues: Prokaryotic ubiquitin-like protein Pup (67 aa).

Positions 1–26 (MATKETGGQKHATRRNQEVEEIEVTT) are disordered. The segment at 23 to 61 (EVTTETSVRNEKLAEDVDDILDEIDEVLESNAEDFVRQF) is ARC ATPase binding. Residues 27–55 (ETSVRNEKLAEDVDDILDEIDEVLESNAE) adopt a coiled-coil conformation. Residue Glu-67 forms an Isoglutamyl lysine isopeptide (Glu-Lys) (interchain with K-? in acceptor proteins) linkage.

It belongs to the prokaryotic ubiquitin-like protein family. As to quaternary structure, strongly interacts with the proteasome-associated ATPase ARC through a hydrophobic interface; the interacting region of Pup lies in its C-terminal half. There is one Pup binding site per ARC hexamer ring.

The protein operates within protein degradation; proteasomal Pup-dependent pathway. Its function is as follows. Protein modifier that is covalently attached to lysine residues of substrate proteins, thereby targeting them for proteasomal degradation. The tagging system is termed pupylation. The sequence is that of Prokaryotic ubiquitin-like protein Pup from Thermobifida fusca (strain YX).